A 565-amino-acid chain; its full sequence is Putative ribonucleoside-diphosphate reductase large subunit (565 aa).

Residues Ser60, 74 to 75 (SC), Gly103, 256 to 260 (NLCNE), and 400 to 404 (PNANS) contribute to the substrate site. Cys75 and Cys273 are disulfide-bonded. The Proton acceptor role is filled by Asn256. Cys258 serves as the catalytic Cysteine radical intermediate. Catalysis depends on Glu260, which acts as the Proton acceptor.

It belongs to the ribonucleoside diphosphate reductase large chain family. As to quaternary structure, heterotetramer composed of a homodimer of the large subunit (R1) and a homodimer of the small subunit (R2). Larger multisubunit protein complex are also active, composed of (R1)n(R2)n.

It carries out the reaction a 2'-deoxyribonucleoside 5'-diphosphate + [thioredoxin]-disulfide + H2O = a ribonucleoside 5'-diphosphate + [thioredoxin]-dithiol. Under complex allosteric control mediated by deoxynucleoside triphosphates and ATP binding. The type of nucleotide bound at the specificity site determines substrate preference. It seems probable that ATP makes the enzyme reduce CDP and UDP, dGTP favors ADP reduction and dTTP favors GDP reduction. In terms of biological role, ribonucleoside-diphosphate reductase holoenzyme provides the precursors necessary for viral DNA synthesis. Allows virus growth in non-dividing cells. Catalyzes the biosynthesis of deoxyribonucleotides from the corresponding ribonucleotides. In Frog virus 3 (isolate Goorha) (FV-3), this protein is Putative ribonucleoside-diphosphate reductase large subunit.